The chain runs to 331 residues: Pectinesterase (331 aa).

Positions 1–17 are cleaved as a signal peptide; it reads MVKSVLASALFAVSALA. Q139 is a binding site for substrate. D162 acts as the Proton donor in catalysis. The active-site Nucleophile is D183. The substrate site is built by R248 and W250.

The protein belongs to the pectinesterase family.

It is found in the secreted. The catalysed reaction is [(1-&gt;4)-alpha-D-galacturonosyl methyl ester](n) + n H2O = [(1-&gt;4)-alpha-D-galacturonosyl](n) + n methanol + n H(+). It functions in the pathway glycan metabolism; pectin degradation; 2-dehydro-3-deoxy-D-gluconate from pectin: step 1/5. Its function is as follows. Involved in maceration and soft-rotting of plant tissue. This is Pectinesterase (pme1) from Aspergillus aculeatus.